Consider the following 122-residue polypeptide: Large ribosomal subunit protein uL14 (122 aa).

It belongs to the universal ribosomal protein uL14 family. In terms of assembly, part of the 50S ribosomal subunit. Forms a cluster with proteins L3 and L19. In the 70S ribosome, L14 and L19 interact and together make contacts with the 16S rRNA in bridges B5 and B8.

Binds to 23S rRNA. Forms part of two intersubunit bridges in the 70S ribosome. This Leuconostoc citreum (strain KM20) protein is Large ribosomal subunit protein uL14.